The sequence spans 504 residues: ATP synthase subunit alpha, chloroplastic (504 aa).

170-177 serves as a coordination point for ATP; sequence GDRQTGKT.

It belongs to the ATPase alpha/beta chains family. F-type ATPases have 2 components, CF(1) - the catalytic core - and CF(0) - the membrane proton channel. CF(1) has five subunits: alpha(3), beta(3), gamma(1), delta(1), epsilon(1). CF(0) has four main subunits: a, b, b' and c.

Its subcellular location is the plastid. It is found in the chloroplast thylakoid membrane. It carries out the reaction ATP + H2O + 4 H(+)(in) = ADP + phosphate + 5 H(+)(out). Produces ATP from ADP in the presence of a proton gradient across the membrane. The alpha chain is a regulatory subunit. This chain is ATP synthase subunit alpha, chloroplastic, found in Triticum aestivum (Wheat).